A 102-amino-acid polypeptide reads, in one-letter code: Small ribosomal subunit protein uS14 (102 aa).

It belongs to the universal ribosomal protein uS14 family. As to quaternary structure, part of the 30S ribosomal subunit. Contacts proteins S3 and S10.

Functionally, binds 16S rRNA, required for the assembly of 30S particles and may also be responsible for determining the conformation of the 16S rRNA at the A site. The sequence is that of Small ribosomal subunit protein uS14 from Wolbachia pipientis subsp. Culex pipiens (strain wPip).